The primary structure comprises 204 residues: Guanylate kinase (204 aa).

The 179-residue stretch at 4–182 (GLLYVISAPS…ALNQLRAIVQ (179 aa)) folds into the Guanylate kinase-like domain. Position 11 to 18 (11 to 18 (APSGAGKT)) interacts with ATP.

Belongs to the guanylate kinase family.

It is found in the cytoplasm. The catalysed reaction is GMP + ATP = GDP + ADP. Functionally, essential for recycling GMP and indirectly, cGMP. The protein is Guanylate kinase of Methylococcus capsulatus (strain ATCC 33009 / NCIMB 11132 / Bath).